The sequence spans 95 residues: Co-chaperonin GroES (95 aa).

The protein belongs to the GroES chaperonin family. As to quaternary structure, heptamer of 7 subunits arranged in a ring. Interacts with the chaperonin GroEL.

It is found in the cytoplasm. Together with the chaperonin GroEL, plays an essential role in assisting protein folding. The GroEL-GroES system forms a nano-cage that allows encapsulation of the non-native substrate proteins and provides a physical environment optimized to promote and accelerate protein folding. GroES binds to the apical surface of the GroEL ring, thereby capping the opening of the GroEL channel. The protein is Co-chaperonin GroES of Pelobacter propionicus (strain DSM 2379 / NBRC 103807 / OttBd1).